The following is a 424-amino-acid chain: Dehydrogenase FUM7 (424 aa).

The protein belongs to the iron-containing alcohol dehydrogenase family. Requires Fe cation as cofactor.

It participates in mycotoxin biosynthesis. Its function is as follows. Dehydrogenase; part of the gene cluster that mediates the biosynthesis of fumonisins B1 (FB1), B2 (FB2), B3 (FB3), and B4 (FB4), which are carcinogenic mycotoxins. Within the pathway, FUM7 is involved the addition of the tricarballylic moieties to the carbon backbone. FUM7 dehydrogenase removes the C-3 hydroxyl of citrate to form tricarballylic acid either before or after the CoA activation by the FUM10 acyl-CoA synthetase and FUM14 catalyzed esterification of CoA-activated tricarballylic acid to the C-14 and C-15 hydroxyls of the fumonisin backbone. The biosynthesis starts with the FUM1-catalyzed carbon chain assembly from one molecule of acetyl-CoA, eight molecules of malonyl-CoA, and two molecules of methionine (in S-adenosyl form). The C18 polyketide chain is released from the enzyme by a nucleophilic attack of a carbanion, which is derived from R-carbon of alanine by decarboxylation, on the carbonyl carbon of polyketide acyl chain. This step is catalyzed by the pyridoxal 5'-phosphate-dependent aminoacyl transferase FUM8. The resultant 3-keto intermediate is then stereospecifically reduced to a 3-hydroxyl product by reductase FUM13. Subsequent oxidations at C-10 by the cytochrome P450 monooxygenase FUM2, C-14 and C-15 by FUM6, FUM12 or FUM15, tricarballylic esterification of the hydroxyl groups on C-14 and C-15 by acyltransferase FUM14, and C-5 hydroxylation by 2-keto-glutarate-dependent dioxygenase FUM3 furnish the biosynthesis of fumonisins. The tricarballylic moieties are most likely derived from the citric acid cycle, and their addition to the carbon backbone may involve FUM7, FUM10, FUM11 and FUM14. This is Dehydrogenase FUM7 from Gibberella moniliformis (strain M3125 / FGSC 7600) (Maize ear and stalk rot fungus).